The primary structure comprises 92 residues: Small ribosomal subunit protein uS19c (92 aa).

It belongs to the universal ribosomal protein uS19 family.

It localises to the plastid. In terms of biological role, protein S19 forms a complex with S13 that binds strongly to the 16S ribosomal RNA. The polypeptide is Small ribosomal subunit protein uS19c (Cuscuta exaltata (Tall dodder)).